The sequence spans 231 residues: 2-hydroxy-3-keto-5-methylthiopentenyl-1-phosphate phosphatase (231 aa).

It belongs to the HAD-like hydrolase superfamily. MtnX family.

The catalysed reaction is 2-hydroxy-5-methylsulfanyl-3-oxopent-1-enyl phosphate + H2O = 1,2-dihydroxy-5-(methylsulfanyl)pent-1-en-3-one + phosphate. It participates in amino-acid biosynthesis; L-methionine biosynthesis via salvage pathway; L-methionine from S-methyl-5-thio-alpha-D-ribose 1-phosphate: step 4/6. Functionally, dephosphorylates 2-hydroxy-3-keto-5-methylthiopentenyl-1-phosphate (HK-MTPenyl-1-P) yielding 1,2-dihydroxy-3-keto-5-methylthiopentene (DHK-MTPene). The chain is 2-hydroxy-3-keto-5-methylthiopentenyl-1-phosphate phosphatase from Bacillus pumilus (strain SAFR-032).